The primary structure comprises 575 residues: Sodium/hydrogen exchanger 8 (575 aa).

Transmembrane regions (helical) follow at residues 54-74, 78-98, 117-137, 150-170, 185-205, 255-275, 305-325, 348-368, 373-393, 411-431, and 445-465; these read MTIF…HLLI, LHFL…GAVI, PNMF…YSLH, LFAV…IYFL, FAFG…IFNA, LGYF…TGLI, GLAE…GIVM, VAFL…FSFP, ISFV…NIFP, MFIM…SLHL, and TTII…MPLI. At Thr504 the chain carries Phosphothreonine. A phosphoserine mark is found at Ser565 and Ser567.

The protein belongs to the monovalent cation:proton antiporter 1 (CPA1) transporter (TC 2.A.36) family. In terms of tissue distribution, intestine and kidneys.

Its subcellular location is the golgi apparatus membrane. The protein resides in the golgi apparatus. It localises to the trans-Golgi network membrane. It is found in the endosome. The protein localises to the multivesicular body membrane. Its subcellular location is the apical cell membrane. The protein resides in the cytoplasmic vesicle. It localises to the secretory vesicle. It is found in the acrosome. The enzyme catalyses Na(+)(in) + H(+)(out) = Na(+)(out) + H(+)(in). With respect to regulation, expression and activity are regulated by acid media by increasing the rate of trafficking to the apical membrane. Inhibited by HOE694 and S3226. Na(+)/H(+) antiporter. Mediates the electoneutral exchange of intracellular H(+) ions for extracellular Na(+) in 1:1 stoichiometry. Acts as an Na(+)/H(+) exchanger in the trans-Golgi. Contributes to the regulation of pH regulation of Golgi apparatus, and consequently, in protein trafficking and endosomal morphology. In germ cells, plays a crucial role in acrosome biogenesis and sperm development, probably by playing a role in the fusion of the Golgi-derived vesicles that form the acrosomal cap. Can also be active at the cell surface of specialized cells. In the small intestine, at the cell membrane, plays a major physiological role in transepithelial absorption of Na(+) and regulates intracellular pH homeostasis of intestinal epithelial cells. Acts as an important regulator of mucosal integrity in the intestine and in the stomach, could mediate the pH fluctuation necessary for mucin exocytosis or assist membrane trafficking of other proteins. Plays a role in photoreceptor survival and in the maintenance of intracellular pH homeostasis in retinal pigment epithelium (RPE cells). This chain is Sodium/hydrogen exchanger 8 (Slc9a8), found in Rattus norvegicus (Rat).